Consider the following 780-residue polypeptide: Exocyst complex component 3-like protein (780 aa).

The protein belongs to the SEC6 family.

The protein resides in the cytoplasmic vesicle. It is found in the secretory vesicle. Functionally, as part of the exocyst, may play a role in regulated exocytosis. The chain is Exocyst complex component 3-like protein (exoc3l1) from Danio rerio (Zebrafish).